We begin with the raw amino-acid sequence, 170 residues long: Adenine phosphoribosyltransferase (170 aa).

The protein belongs to the purine/pyrimidine phosphoribosyltransferase family. In terms of assembly, homodimer.

It is found in the cytoplasm. The catalysed reaction is AMP + diphosphate = 5-phospho-alpha-D-ribose 1-diphosphate + adenine. It functions in the pathway purine metabolism; AMP biosynthesis via salvage pathway; AMP from adenine: step 1/1. In terms of biological role, catalyzes a salvage reaction resulting in the formation of AMP, that is energically less costly than de novo synthesis. The protein is Adenine phosphoribosyltransferase of Fusobacterium nucleatum subsp. nucleatum (strain ATCC 25586 / DSM 15643 / BCRC 10681 / CIP 101130 / JCM 8532 / KCTC 2640 / LMG 13131 / VPI 4355).